Reading from the N-terminus, the 123-residue chain is Cyclic ether formation enzyme xenC (123 aa).

A signal peptide spans 1 to 24 (MSSLLLSDVLSYGIFGFSALCVQA). 2 helical membrane passes run 58–78 (SALRYVFVSINIAVCVLLWSP) and 102–122 (LGESPIPHLLLVSTVGAAILV).

The protein belongs to the cyclic ether formation enzyme xenC family.

The protein resides in the membrane. It participates in mycotoxin biosynthesis. Its function is as follows. Cyclic ether formation enzyme; part of the gene cluster that mediates the biosynthesis of xenoacremones such as xenoacremone A, a compound that shows inhibitory activity toward the PI3K/AKT signaling pathway and which has the ability to induce apoptosis of A549 lung cancer cells. Within the pathway, cooperation of the hybrid PKS-NRPS xenE and the trans-acting enoyl reductase xenG is responsible for the formation of the reduced tyrosine-nonaketide derivative. The alpha/beta hydrolase xenA then accelerates intramolecular nucleophilic attack to give a pyrrolidone derivative. Subsequently, three enzymes, xenF, xenD, and xenC, coordinately participate in the conversion to xenoacremone B. XenF catalyzes sigmatropic rearrangement to form an A-ring, which leads to an unusual intermediate with a hexane ring, which is required for the formation of the tricarbocyclic product. Epoxidation catalyzed by xenD and the formation of the paracyclophane ether catalyzed by xenC initiate a spontaneous intramolecular Diels-Alder (IMDA) reaction to yield xenoacremone B. Spontaneous hydration of xenoacremone B leads to the formation of xenoacremone A, which undergoes subsequent methylation to afford xenoacremone C. The polypeptide is Cyclic ether formation enzyme xenC (Xenoacremonium sinensis (Endophyte fungus)).